The primary structure comprises 363 residues: Carbamoyl phosphate synthase small chain (363 aa).

A CPSase region spans residues 1 to 173 (MMKAFLVLDN…SKYIFGTHTG (173 aa)). L-glutamine is bound by residues Ser46, Gly225, and Gly227. Residues 177–363 (KLAVYDYGVK…YDLVEKTKKG (187 aa)) form the Glutamine amidotransferase type-1 domain. The Nucleophile role is filled by Cys253. L-glutamine contacts are provided by Leu254, Gln257, Asn295, Gly297, and Phe298. Residues His336 and Glu338 contribute to the active site.

Belongs to the CarA family. Composed of two chains; the small (or glutamine) chain promotes the hydrolysis of glutamine to ammonia, which is used by the large (or ammonia) chain to synthesize carbamoyl phosphate. Tetramer of heterodimers (alpha,beta)4.

The enzyme catalyses hydrogencarbonate + L-glutamine + 2 ATP + H2O = carbamoyl phosphate + L-glutamate + 2 ADP + phosphate + 2 H(+). It catalyses the reaction L-glutamine + H2O = L-glutamate + NH4(+). The protein operates within amino-acid biosynthesis; L-arginine biosynthesis; carbamoyl phosphate from bicarbonate: step 1/1. It participates in pyrimidine metabolism; UMP biosynthesis via de novo pathway; (S)-dihydroorotate from bicarbonate: step 1/3. Functionally, small subunit of the glutamine-dependent carbamoyl phosphate synthetase (CPSase). CPSase catalyzes the formation of carbamoyl phosphate from the ammonia moiety of glutamine, carbonate, and phosphate donated by ATP, constituting the first step of 2 biosynthetic pathways, one leading to arginine and/or urea and the other to pyrimidine nucleotides. The small subunit (glutamine amidotransferase) binds and cleaves glutamine to supply the large subunit with the substrate ammonia. This Leptospira interrogans serogroup Icterohaemorrhagiae serovar copenhageni (strain Fiocruz L1-130) protein is Carbamoyl phosphate synthase small chain.